A 286-amino-acid chain; its full sequence is 3-hydroxybutyryl-CoA dehydrogenase (286 aa).

This sequence belongs to the 3-hydroxyacyl-CoA dehydrogenase family.

The catalysed reaction is 3-hydroxybutanoyl-CoA + NAD(+) = acetoacetyl-CoA + NADH + H(+). The enzyme catalyses (3S)-3-hydroxybutanoyl-CoA + NADP(+) = acetoacetyl-CoA + NADPH + H(+). Its pathway is lipid metabolism; butanoate metabolism. The polypeptide is 3-hydroxybutyryl-CoA dehydrogenase (fadB2) (Mycobacterium tuberculosis (strain CDC 1551 / Oshkosh)).